The chain runs to 116 residues: Large ribosomal subunit protein bL19 (116 aa).

The protein belongs to the bacterial ribosomal protein bL19 family.

In terms of biological role, this protein is located at the 30S-50S ribosomal subunit interface and may play a role in the structure and function of the aminoacyl-tRNA binding site. In Streptomyces lividans, this protein is Large ribosomal subunit protein bL19 (rplS).